A 196-amino-acid polypeptide reads, in one-letter code: UMP-CMP kinase (196 aa).

ATP is bound at residue 13 to 18 (GAGKGT). The segment at 33–63 (SAGDLLRDERKKPDSQYGELIESYIRDGRIV) is NMP. Residues Arg39, 61 to 63 (RIV), and 93 to 96 (GFPR) each bind a ribonucleoside 5'-phosphate. Asn100 provides a ligand contact to CMP. Positions 133-143 (ERGKSSGRSDD) are LID. Arg134 lines the ATP pocket. Positions 140 and 151 each coordinate a ribonucleoside 5'-phosphate. Position 179 (Lys179) interacts with ATP.

This sequence belongs to the adenylate kinase family. UMP-CMP kinase subfamily. Monomer. It depends on Mg(2+) as a cofactor.

It localises to the cytoplasm. The protein localises to the nucleus. It catalyses the reaction CMP + ATP = CDP + ADP. The catalysed reaction is dCMP + ATP = dCDP + ADP. It carries out the reaction UMP + ATP = UDP + ADP. The enzyme catalyses a 2'-deoxyribonucleoside 5'-diphosphate + ATP = a 2'-deoxyribonucleoside 5'-triphosphate + ADP. It catalyses the reaction a ribonucleoside 5'-diphosphate + ATP = a ribonucleoside 5'-triphosphate + ADP. In terms of biological role, catalyzes the phosphorylation of pyrimidine nucleoside monophosphates at the expense of ATP. Plays an important role in de novo pyrimidine nucleotide biosynthesis. Has preference for UMP and CMP as phosphate acceptors. Also displays broad nucleoside diphosphate kinase activity. This Xenopus tropicalis (Western clawed frog) protein is UMP-CMP kinase (cmpk1).